Reading from the N-terminus, the 86-residue chain is YcgL domain-containing protein XCV4171 (86 aa).

In terms of domain architecture, YcgL spans 1 to 83 (MHAYVYKSQR…PKTIVLAGEC (83 aa)).

The polypeptide is YcgL domain-containing protein XCV4171 (Xanthomonas euvesicatoria pv. vesicatoria (strain 85-10) (Xanthomonas campestris pv. vesicatoria)).